Reading from the N-terminus, the 1358-residue chain is DNA-directed RNA polymerase subunit beta (1358 aa).

It belongs to the RNA polymerase beta chain family. The RNAP catalytic core consists of 2 alpha, 1 beta, 1 beta' and 1 omega subunit. When a sigma factor is associated with the core the holoenzyme is formed, which can initiate transcription.

The catalysed reaction is RNA(n) + a ribonucleoside 5'-triphosphate = RNA(n+1) + diphosphate. Its function is as follows. DNA-dependent RNA polymerase catalyzes the transcription of DNA into RNA using the four ribonucleoside triphosphates as substrates. This chain is DNA-directed RNA polymerase subunit beta, found in Thioalkalivibrio sulfidiphilus (strain HL-EbGR7).